The primary structure comprises 467 residues: ATP synthase subunit beta, chloroplastic (467 aa).

An ATP-binding site is contributed by glycine 149–threonine 156.

The protein belongs to the ATPase alpha/beta chains family. F-type ATPases have 2 components, CF(1) - the catalytic core - and CF(0) - the membrane proton channel. CF(1) has five subunits: alpha(3), beta(3), gamma(1), delta(1), epsilon(1). CF(0) has four main subunits: a(1), b(1), b'(1) and c(9-12).

The protein resides in the plastid. Its subcellular location is the chloroplast thylakoid membrane. The enzyme catalyses ATP + H2O + 4 H(+)(in) = ADP + phosphate + 5 H(+)(out). Produces ATP from ADP in the presence of a proton gradient across the membrane. The catalytic sites are hosted primarily by the beta subunits. This Cyanidioschyzon merolae (strain NIES-3377 / 10D) (Unicellular red alga) protein is ATP synthase subunit beta, chloroplastic.